The primary structure comprises 374 residues: Alcohol dehydrogenase class-3 (374 aa).

A2 is modified (N-acetylalanine). C45, H67, C97, C100, C103, C111, and C174 together coordinate Zn(2+). Residue K233 is modified to N6-succinyllysine. A Phosphoserine modification is found at S247. An N6-succinyllysine modification is found at K315. Phosphoserine is present on residues S324 and S351.

It belongs to the zinc-containing alcohol dehydrogenase family. Class-III subfamily. As to quaternary structure, homodimer. Requires Zn(2+) as cofactor.

It is found in the cytoplasm. It catalyses the reaction a primary alcohol + NAD(+) = an aldehyde + NADH + H(+). It carries out the reaction a secondary alcohol + NAD(+) = a ketone + NADH + H(+). The catalysed reaction is S-(hydroxymethyl)glutathione + NADP(+) = S-formylglutathione + NADPH + H(+). The enzyme catalyses S-(hydroxymethyl)glutathione + NAD(+) = S-formylglutathione + NADH + H(+). It catalyses the reaction 20-oxo-(5Z,8Z,11Z,14Z)-eicosatetraenoate + NAD(+) + H2O = (5Z,8Z,11Z,14Z)-eicosatetraenedioate + NADH + 2 H(+). It carries out the reaction 20-hydroxy-(5Z,8Z,11Z,14Z)-eicosatetraenoate + NAD(+) = 20-oxo-(5Z,8Z,11Z,14Z)-eicosatetraenoate + NADH + H(+). The catalysed reaction is S-nitrosoglutathione + NADH + H(+) = S-(hydroxysulfenamide)glutathione + NAD(+). Functionally, catalyzes the oxidation of long-chain primary alcohols and the oxidation of S-(hydroxymethyl) glutathione. Also oxidizes long chain omega-hydroxy fatty acids, such as 20-HETE, producing both the intermediate aldehyde, 20-oxoarachidonate and the end product, a dicarboxylic acid, (5Z,8Z,11Z,14Z)-eicosatetraenedioate. Class-III ADH is remarkably ineffective in oxidizing ethanol. Required for clearance of cellular formaldehyde, a cytotoxic and carcinogenic metabolite that induces DNA damage. Also acts as a S-nitroso-glutathione reductase by catalyzing the NADH-dependent reduction of S-nitrosoglutathione, thereby regulating protein S-nitrosylation. In Oryctolagus cuniculus (Rabbit), this protein is Alcohol dehydrogenase class-3.